A 337-amino-acid chain; its full sequence is LIX1-like protein (337 aa).

Residues methionine 1 to leucine 64 are disordered. Positions proline 26–proline 38 are enriched in low complexity. A compositionally biased stretch (pro residues) spans proline 39–leucine 56.

This sequence belongs to the LIX1 family.

This is LIX1-like protein (LIX1L) from Homo sapiens (Human).